A 421-amino-acid chain; its full sequence is 4-hydroxy-3-methylbut-2-en-1-yl diphosphate synthase (flavodoxin) (421 aa).

[4Fe-4S] cluster contacts are provided by Cys311, Cys314, Cys357, and Glu364.

It belongs to the IspG family. [4Fe-4S] cluster serves as cofactor.

It carries out the reaction (2E)-4-hydroxy-3-methylbut-2-enyl diphosphate + oxidized [flavodoxin] + H2O + 2 H(+) = 2-C-methyl-D-erythritol 2,4-cyclic diphosphate + reduced [flavodoxin]. It functions in the pathway isoprenoid biosynthesis; isopentenyl diphosphate biosynthesis via DXP pathway; isopentenyl diphosphate from 1-deoxy-D-xylulose 5-phosphate: step 5/6. Converts 2C-methyl-D-erythritol 2,4-cyclodiphosphate (ME-2,4cPP) into 1-hydroxy-2-methyl-2-(E)-butenyl 4-diphosphate. In Stenotrophomonas maltophilia (strain K279a), this protein is 4-hydroxy-3-methylbut-2-en-1-yl diphosphate synthase (flavodoxin).